Reading from the N-terminus, the 569-residue chain is ATP-dependent RNA helicase dhh1 (569 aa).

The segment covering 1-16 (MSDQLADQLKATSLSS) has biased composition (polar residues). The tract at residues 1–39 (MSDQLADQLKATSLSSGPEDWKKGLNLPARDTRQQTEDV) is disordered. Positions 45 to 73 (LDWEDFIHDRDLLMGIFEAGFEKPSPIQE) match the Q motif motif. Residues 76–246 (IPVALTGRDI…DKNMTSPYEI (171 aa)) enclose the Helicase ATP-binding domain. 89 to 96 (AKNGTGKT) lines the ATP pocket. The DEAD box motif lies at 194–197 (DEAD). The Helicase C-terminal domain maps to 256 to 416 (GITQYYAFVE…PIPQTIDKSL (161 aa)). Residues 436 to 569 (AQQPQQQLQQ…GQPQGPLSAQ (134 aa)) form a disordered region. Positions 437 to 482 (QQPQQQLQQSQRPQQSQQQQHFSTQTQPSNQLPPQQGNQQLGFNPQ) are enriched in low complexity. Over residues 495–520 (GDWQGQNGRQNGTGASNNQPRPTNYQ) the composition is skewed to polar residues. Positions 529-542 (SRGGRGRGFQGQGG) are enriched in gly residues. A compositionally biased stretch (low complexity) spans 543-569 (RQNQNYGGQRGPRTQGQGQPQGPLSAQ).

The protein belongs to the DEAD box helicase family. DDX6/DHH1 subfamily.

It localises to the cytoplasm. The protein resides in the P-body. It catalyses the reaction ATP + H2O = ADP + phosphate + H(+). Functionally, ATP-dependent RNA helicase involved in mRNA turnover, and more specifically in mRNA decapping. Is involved in G1/S DNA-damage checkpoint recovery, probably through the regulation of the translational status of a subset of mRNAs. May also have a role in translation and mRNA nuclear export. This chain is ATP-dependent RNA helicase dhh1 (drh-10), found in Neurospora crassa (strain ATCC 24698 / 74-OR23-1A / CBS 708.71 / DSM 1257 / FGSC 987).